The sequence spans 376 residues: Putative dihydroorotase (376 aa).

Zn(2+)-binding residues include His35 and His37. Residues His37–Arg39 and Asn66 contribute to the substrate site. 3 residues coordinate Zn(2+): Asp114, His138, and His187. A substrate-binding site is contributed by Asn230. A Zn(2+)-binding site is contributed by Asp257. Asp257 is an active-site residue. Substrate is bound by residues His261 and Tyr273 to Gly274.

It belongs to the metallo-dependent hydrolases superfamily. DHOase family. Class I DHOase subfamily. Requires Zn(2+) as cofactor.

It catalyses the reaction (S)-dihydroorotate + H2O = N-carbamoyl-L-aspartate + H(+). It participates in pyrimidine metabolism; UMP biosynthesis via de novo pathway; (S)-dihydroorotate from bicarbonate: step 3/3. Its function is as follows. Catalyzes the reversible cyclization of carbamoyl aspartate to dihydroorotate. The sequence is that of Putative dihydroorotase (pyrC) from Thermotoga maritima (strain ATCC 43589 / DSM 3109 / JCM 10099 / NBRC 100826 / MSB8).